The following is a 446-amino-acid chain: Phosphoglucosamine mutase (446 aa).

Catalysis depends on Ser100, which acts as the Phosphoserine intermediate. 4 residues coordinate Mg(2+): Ser100, Asp239, Asp241, and Asp243. Position 100 is a phosphoserine (Ser100).

It belongs to the phosphohexose mutase family. Mg(2+) serves as cofactor. Post-translationally, activated by phosphorylation.

The catalysed reaction is alpha-D-glucosamine 1-phosphate = D-glucosamine 6-phosphate. Catalyzes the conversion of glucosamine-6-phosphate to glucosamine-1-phosphate. The protein is Phosphoglucosamine mutase of Oceanobacillus iheyensis (strain DSM 14371 / CIP 107618 / JCM 11309 / KCTC 3954 / HTE831).